The chain runs to 131 residues: Glycine cleavage system H protein (131 aa).

Residues Thr24–Gln106 enclose the Lipoyl-binding domain. N6-lipoyllysine is present on Lys65.

The protein belongs to the GcvH family. In terms of assembly, the glycine cleavage system is composed of four proteins: P, T, L and H. Requires (R)-lipoate as cofactor.

Its function is as follows. The glycine cleavage system catalyzes the degradation of glycine. The H protein shuttles the methylamine group of glycine from the P protein to the T protein. This Mycolicibacterium vanbaalenii (strain DSM 7251 / JCM 13017 / BCRC 16820 / KCTC 9966 / NRRL B-24157 / PYR-1) (Mycobacterium vanbaalenii) protein is Glycine cleavage system H protein.